The chain runs to 119 residues: UPF0102 protein Pmen_0910 (119 aa).

This sequence belongs to the UPF0102 family.

The polypeptide is UPF0102 protein Pmen_0910 (Ectopseudomonas mendocina (strain ymp) (Pseudomonas mendocina)).